A 327-amino-acid chain; its full sequence is Phenylalanine--tRNA ligase alpha subunit (327 aa).

Glutamate 252 provides a ligand contact to Mg(2+).

The protein belongs to the class-II aminoacyl-tRNA synthetase family. Phe-tRNA synthetase alpha subunit type 1 subfamily. In terms of assembly, tetramer of two alpha and two beta subunits. Requires Mg(2+) as cofactor.

It is found in the cytoplasm. The catalysed reaction is tRNA(Phe) + L-phenylalanine + ATP = L-phenylalanyl-tRNA(Phe) + AMP + diphosphate + H(+). The sequence is that of Phenylalanine--tRNA ligase alpha subunit from Shewanella putrefaciens (strain CN-32 / ATCC BAA-453).